The following is a 232-amino-acid chain: Large ribosomal subunit protein uL1 (232 aa).

It belongs to the universal ribosomal protein uL1 family. As to quaternary structure, part of the 50S ribosomal subunit.

Binds directly to 23S rRNA. The L1 stalk is quite mobile in the ribosome, and is involved in E site tRNA release. In terms of biological role, protein L1 is also a translational repressor protein, it controls the translation of the L11 operon by binding to its mRNA. The chain is Large ribosomal subunit protein uL1 from Ruegeria pomeroyi (strain ATCC 700808 / DSM 15171 / DSS-3) (Silicibacter pomeroyi).